Reading from the N-terminus, the 285-residue chain is Small ribosomal subunit protein uS2 (285 aa).

Residues 229-285 (AGLASGDAKPEAGAGEPLAEWEQELLAQANPNAEGSAEAAPAAATEEAPAAQTPADF) are disordered. Over residues 257–285 (ANPNAEGSAEAAPAAATEEAPAAQTPADF) the composition is skewed to low complexity.

The protein belongs to the universal ribosomal protein uS2 family.

This chain is Small ribosomal subunit protein uS2, found in Nocardia farcinica (strain IFM 10152).